The sequence spans 126 residues: Small ribosomal subunit protein uS12 (126 aa).

A disordered region spans residues 1–29; sequence MPTIQQLIRQPRAPKKRRSKSPALQKCPQ. Residue D89 is modified to 3-methylthioaspartic acid.

This sequence belongs to the universal ribosomal protein uS12 family. In terms of assembly, part of the 30S ribosomal subunit. Contacts proteins S8 and S17. May interact with IF1 in the 30S initiation complex.

Functionally, with S4 and S5 plays an important role in translational accuracy. In terms of biological role, interacts with and stabilizes bases of the 16S rRNA that are involved in tRNA selection in the A site and with the mRNA backbone. Located at the interface of the 30S and 50S subunits, it traverses the body of the 30S subunit contacting proteins on the other side and probably holding the rRNA structure together. The combined cluster of proteins S8, S12 and S17 appears to hold together the shoulder and platform of the 30S subunit. The chain is Small ribosomal subunit protein uS12 from Protochlamydia amoebophila (strain UWE25).